Consider the following 291-residue polypeptide: ADP-dependent (S)-NAD(P)H-hydrate dehydratase (291 aa).

A YjeF C-terminal domain is found at 5-273 (SKDILEEVIT…QALPTYMKKY (269 aa)). (6S)-NADPHX contacts are provided by Ala-40, Gly-103, and His-153. Gly-215 is a binding site for AMP. Residue Asp-216 participates in (6S)-NADPHX binding.

It belongs to the NnrD/CARKD family. In terms of assembly, homotetramer. The cofactor is Mg(2+).

The enzyme catalyses (6S)-NADHX + ADP = AMP + phosphate + NADH + H(+). It carries out the reaction (6S)-NADPHX + ADP = AMP + phosphate + NADPH + H(+). Functionally, catalyzes the dehydration of the S-form of NAD(P)HX at the expense of ADP, which is converted to AMP. Together with NAD(P)HX epimerase, which catalyzes the epimerization of the S- and R-forms, the enzyme allows the repair of both epimers of NAD(P)HX, a damaged form of NAD(P)H that is a result of enzymatic or heat-dependent hydration. This Enterococcus faecalis (strain ATCC 700802 / V583) protein is ADP-dependent (S)-NAD(P)H-hydrate dehydratase.